The sequence spans 615 residues: UvrABC system protein C (615 aa).

The GIY-YIG domain occupies 12-91; that stretch reads EKPGVYIMKD…IKKYKPKYNV (80 aa). One can recognise a UVR domain in the interval 203-238; it reads DWLIQKLKEDMKKAAEELRFEEAARIRDQIFAIERT.

This sequence belongs to the UvrC family. In terms of assembly, interacts with UvrB in an incision complex.

It localises to the cytoplasm. In terms of biological role, the UvrABC repair system catalyzes the recognition and processing of DNA lesions. UvrC both incises the 5' and 3' sides of the lesion. The N-terminal half is responsible for the 3' incision and the C-terminal half is responsible for the 5' incision. This chain is UvrABC system protein C, found in Thermoanaerobacter sp. (strain X514).